The chain runs to 289 residues: Acetylglutamate kinase (289 aa).

Residues 65 to 66 (GG), Arg87, and Asn187 contribute to the substrate site.

Belongs to the acetylglutamate kinase family. ArgB subfamily.

The protein localises to the cytoplasm. It catalyses the reaction N-acetyl-L-glutamate + ATP = N-acetyl-L-glutamyl 5-phosphate + ADP. Its pathway is amino-acid biosynthesis; L-arginine biosynthesis; N(2)-acetyl-L-ornithine from L-glutamate: step 2/4. Catalyzes the ATP-dependent phosphorylation of N-acetyl-L-glutamate. The chain is Acetylglutamate kinase from Chromobacterium violaceum (strain ATCC 12472 / DSM 30191 / JCM 1249 / CCUG 213 / NBRC 12614 / NCIMB 9131 / NCTC 9757 / MK).